Here is a 604-residue protein sequence, read N- to C-terminus: NADP-dependent malic enzyme, mitochondrial (604 aa).

The disordered stretch occupies residues 29 to 50; it reads APAQGCHSKPGPARPVPLKKRG. Tyr137 (proton donor) is an active-site residue. Residue Arg190 participates in NAD(+) binding. Catalysis depends on Lys208, which acts as the Proton acceptor. Residues Glu280, Asp281, and Asp304 each coordinate a divalent metal cation. Asp304 is an NAD(+) binding site. At Ser371 the chain carries Phosphoserine. Position 443 (Asn443) interacts with NAD(+).

It belongs to the malic enzymes family. Mg(2+) serves as cofactor. Requires Mn(2+) as cofactor. In terms of tissue distribution, expressed predominantly in organs with a low-division rate.

The protein resides in the mitochondrion matrix. It carries out the reaction (S)-malate + NADP(+) = pyruvate + CO2 + NADPH. The catalysed reaction is oxaloacetate + H(+) = pyruvate + CO2. Functionally, catalyzes the oxidative decarboxylation of (S)-malate to pyruvate using NADP(+) as a cofactor. Can also reverse the decarboxylation reaction, but only with significantly lower efficiency. The polypeptide is NADP-dependent malic enzyme, mitochondrial (Homo sapiens (Human)).